We begin with the raw amino-acid sequence, 171 residues long: UPF0398 protein SPy_1647/M5005_Spy1353 (171 aa).

It belongs to the UPF0398 family.

This chain is UPF0398 protein SPy_1647/M5005_Spy1353, found in Streptococcus pyogenes serotype M1.